We begin with the raw amino-acid sequence, 341 residues long: S-adenosylmethionine:tRNA ribosyltransferase-isomerase (341 aa).

The protein belongs to the QueA family. As to quaternary structure, monomer.

The protein resides in the cytoplasm. The catalysed reaction is 7-aminomethyl-7-carbaguanosine(34) in tRNA + S-adenosyl-L-methionine = epoxyqueuosine(34) in tRNA + adenine + L-methionine + 2 H(+). It functions in the pathway tRNA modification; tRNA-queuosine biosynthesis. Functionally, transfers and isomerizes the ribose moiety from AdoMet to the 7-aminomethyl group of 7-deazaguanine (preQ1-tRNA) to give epoxyqueuosine (oQ-tRNA). The protein is S-adenosylmethionine:tRNA ribosyltransferase-isomerase of Clostridium tetani (strain Massachusetts / E88).